The sequence spans 238 residues: Ankyrin repeat domain-containing protein 49 (238 aa).

Residues 38–57 (TGTQSLWVGNSDEDEEQEEK) form a disordered region. The residue at position 48 (Ser48) is a Phosphoserine. Residues 48-57 (SDEDEEQEEK) show a composition bias toward acidic residues. ANK repeat units lie at residues 72–105 (DPSK…TRDE), 106–135 (DEYT…DVHA), 139–168 (DGWT…DINA), and 172–205 (GLLT…ELKN).

In terms of tissue distribution, expressed in spermatogonia, spermatocytes and round spermatids.

It localises to the nucleus. Functionally, may have a role in spermatogenesis where it promotes autophagy in response to serum starvation, via the NF-kappaB pathway. This Mus musculus (Mouse) protein is Ankyrin repeat domain-containing protein 49 (Ankrd49).